The sequence spans 545 residues: Glucose-6-phosphate isomerase (545 aa).

Glu345 functions as the Proton donor in the catalytic mechanism. Residues His376 and Lys514 contribute to the active site.

Belongs to the GPI family.

It is found in the cytoplasm. The catalysed reaction is alpha-D-glucose 6-phosphate = beta-D-fructose 6-phosphate. It participates in carbohydrate biosynthesis; gluconeogenesis. The protein operates within carbohydrate degradation; glycolysis; D-glyceraldehyde 3-phosphate and glycerone phosphate from D-glucose: step 2/4. Catalyzes the reversible isomerization of glucose-6-phosphate to fructose-6-phosphate. This Leptothrix cholodnii (strain ATCC 51168 / LMG 8142 / SP-6) (Leptothrix discophora (strain SP-6)) protein is Glucose-6-phosphate isomerase.